Reading from the N-terminus, the 1081-residue chain is MAQRNPEPTIRVLYATDSCVITYSLMLLTGQESSEGVYAISYDWSSELDDLFGRQPRAPNTDAGDGWSSTEQSDADQLATALLQRKPSVSFCLLSGMVGGASDEPQDRVRPMFVCVFSTWTGARALAMTLSHGHPLSSNTLLQALTEEATFLLHNDLILALAITTENVTARSGRTAAAAKYDPQRGSVKAAVIGHSTGRSGLTSVYIHHENKVLTAFRRLYCNNNTTPFWFASKFGPGEREIVLATRYYLFQAIRCSRSGGTYDLQAVKDFIRTYNVPAAPNPTGLDLTHLTSFSLLSKFCCQSWYSRGPCALALPRYVDLRIQADVAEVSALEGFIAADRQGLRVSDREFITYIYLAHFESFNRKQLYDHLLAVSIADPGDIDRITSTSSLKRGTIEKFFAQVRIQLNIRDYIAHNVNPRVVCLPASIGSQYAQDKTYTPSSTTMSTGSAPLGVCDTSTPILKLLDRVESSLAGRGWIQTIVSPNKPQSVHSTPPLDQSRGDELSPGVSSQCGISRRLLHIASSPPVNGRALPLEVLFGQKGVPGPAPVYRVALPSKRQAFAVIANDRWETTTQNLARPGGSKQAYEGGFALAGFGEIDDCSLAWRDLQLTRTTSGVCRTALASSNASAQMYINRNEIFNSSLAVSNIILDVDFGIKRRVPLGMLHLAMRGFRAGIITTLSLIFSDATVQWDSYPCYFYKTSCPPQLVRALHRGEPSSFPDYVDGVEECYMESDFIDDYAAMEEYTDGPMDDYEMMMVDNECPQAACDNTPPNKEGGKTPLQRLDDTDACECTEKMGFRVTVPVPPPYLLAGPEALRGLARIIQQAVVLERTFTESMCSVLRDFSFIDTGVYSHGRSLRLPFFCKVGDSGEVYGGLYPFYVIPPKCNDVDEFVAQHSNPANFHFHAAPRHPTITHVITDLGGDYVSFFERKVARNREAIMTKRATLESLLSSANVSIKSHEAVEAFVVDVVLGEVVSHLATHFPDQSGEYQTVGVHTVVTKPDWILMQINRSGNAYRSQGFSCLRAKHLRSARGLARTFLSISADVHGRLCASISQQCFATKCGNNKMCTIFTLEVDRAK.

The span at 484-497 shows a compositional bias: polar residues; sequence SPNKPQSVHSTPPL. Positions 484-508 are disordered; it reads SPNKPQSVHSTPPLDQSRGDELSPG. The CHC2-type zinc-finger motif lies at 1024–1064; the sequence is CLRAKHLRSARGLARTFLSISADVHGRLCASISQQCFATKC.

Belongs to the herpesviridae DNA primase family. As to quaternary structure, associates with the helicase and the primase-associated factor to form the helicase-primase factor.

It is found in the host nucleus. Functionally, essential component of the helicase/primase complex. Unwinds the DNA at the replication forks and generates single-stranded DNA for both leading and lagging strand synthesis. The primase initiates primer synthesis and thereby produces large amount of short RNA primers on the lagging strand that the polymerase elongates using dNTPs. The chain is DNA primase from Equus caballus (Horse).